A 160-amino-acid chain; its full sequence is Ribosomal RNA large subunit methyltransferase H (160 aa).

L76 and G108 together coordinate S-adenosyl-L-methionine.

It belongs to the RNA methyltransferase RlmH family. Homodimer.

It is found in the cytoplasm. It catalyses the reaction pseudouridine(1915) in 23S rRNA + S-adenosyl-L-methionine = N(3)-methylpseudouridine(1915) in 23S rRNA + S-adenosyl-L-homocysteine + H(+). In terms of biological role, specifically methylates the pseudouridine at position 1915 (m3Psi1915) in 23S rRNA. This chain is Ribosomal RNA large subunit methyltransferase H, found in Rhodopseudomonas palustris (strain TIE-1).